A 301-amino-acid polypeptide reads, in one-letter code: Sulfate adenylyltransferase subunit 2 (301 aa).

It belongs to the PAPS reductase family. CysD subfamily. In terms of assembly, heterodimer composed of CysD, the smaller subunit, and CysN.

The catalysed reaction is sulfate + ATP + H(+) = adenosine 5'-phosphosulfate + diphosphate. The protein operates within sulfur metabolism; hydrogen sulfide biosynthesis; sulfite from sulfate: step 1/3. Its function is as follows. With CysN forms the ATP sulfurylase (ATPS) that catalyzes the adenylation of sulfate producing adenosine 5'-phosphosulfate (APS) and diphosphate, the first enzymatic step in sulfur assimilation pathway. APS synthesis involves the formation of a high-energy phosphoric-sulfuric acid anhydride bond driven by GTP hydrolysis by CysN coupled to ATP hydrolysis by CysD. This Citrifermentans bemidjiense (strain ATCC BAA-1014 / DSM 16622 / JCM 12645 / Bem) (Geobacter bemidjiensis) protein is Sulfate adenylyltransferase subunit 2.